Reading from the N-terminus, the 217-residue chain is ATP-dependent Clp protease proteolytic subunit 2 (217 aa).

Ser113 acts as the Nucleophile in catalysis. His138 is an active-site residue.

Belongs to the peptidase S14 family. As to quaternary structure, fourteen ClpP subunits assemble into 2 heptameric rings which stack back to back to give a disk-like structure with a central cavity, resembling the structure of eukaryotic proteasomes.

The protein resides in the cytoplasm. The catalysed reaction is Hydrolysis of proteins to small peptides in the presence of ATP and magnesium. alpha-casein is the usual test substrate. In the absence of ATP, only oligopeptides shorter than five residues are hydrolyzed (such as succinyl-Leu-Tyr-|-NHMec, and Leu-Tyr-Leu-|-Tyr-Trp, in which cleavage of the -Tyr-|-Leu- and -Tyr-|-Trp bonds also occurs).. In terms of biological role, cleaves peptides in various proteins in a process that requires ATP hydrolysis. Has a chymotrypsin-like activity. Plays a major role in the degradation of misfolded proteins. This chain is ATP-dependent Clp protease proteolytic subunit 2, found in Frankia casuarinae (strain DSM 45818 / CECT 9043 / HFP020203 / CcI3).